We begin with the raw amino-acid sequence, 198 residues long: Protein GrpE (198 aa).

Residues 1–21 are compositionally biased toward basic and acidic residues; the sequence is MMKKAEDPLQDREGTIQEHTE. Residues 1 to 56 are disordered; that stretch reads MMKKAEDPLQDREGTIQEHTEGQAGTAAADQSAAVETPESRIAGLEREVQAEKEQN. Residues 22-34 are compositionally biased toward low complexity; that stretch reads GQAGTAAADQSAA. Residues 44–56 are compositionally biased toward basic and acidic residues; it reads GLEREVQAEKEQN.

It belongs to the GrpE family. Homodimer.

The protein resides in the cytoplasm. Participates actively in the response to hyperosmotic and heat shock by preventing the aggregation of stress-denatured proteins, in association with DnaK and GrpE. It is the nucleotide exchange factor for DnaK and may function as a thermosensor. Unfolded proteins bind initially to DnaJ; upon interaction with the DnaJ-bound protein, DnaK hydrolyzes its bound ATP, resulting in the formation of a stable complex. GrpE releases ADP from DnaK; ATP binding to DnaK triggers the release of the substrate protein, thus completing the reaction cycle. Several rounds of ATP-dependent interactions between DnaJ, DnaK and GrpE are required for fully efficient folding. The polypeptide is Protein GrpE (Chlorobium luteolum (strain DSM 273 / BCRC 81028 / 2530) (Pelodictyon luteolum)).